Here is a 245-residue protein sequence, read N- to C-terminus: Probable phosphatase YcdX (245 aa).

His7, His9, His15, His40, Glu73, His101, His131, Asp192, and His194 together coordinate Zn(2+).

Belongs to the PHP family. Homotrimer. The cofactor is Zn(2+).

The polypeptide is Probable phosphatase YcdX (Escherichia coli O139:H28 (strain E24377A / ETEC)).